A 35-amino-acid chain; its full sequence is Conotoxin Cal6.1c (35 aa).

Residues 1–35 constitute a propeptide that is removed on maturation; it reads GLNRPSKRCLAGSAPCEFHKRSTCCSGHCIIWWCA. 3 disulfides stabilise this stretch: Cys-9–Cys-25, Cys-16–Cys-29, and Cys-24–Cys-34.

This sequence belongs to the conotoxin O1 superfamily. As to expression, expressed by the venom duct.

Its subcellular location is the secreted. Functionally, probable neurotoxin with unknown target. Possibly targets ion channels. This is Conotoxin Cal6.1c from Californiconus californicus (California cone).